The sequence spans 263 residues: MACGDYDDKLSLDLIRDSLIRQEDTIIFNLIERIKFPINSTLYKKPSSWFPDFTGSLFQYLFQETEALQSKVGRYLSPEENPFFPDNLPASIVPPSKCPPVLHPVAESININEKILDVYLNQLLPLFCTEADEGNYATTAACDIQLLQAISRRIHYGKFVAEVKFRDCSDEYTPLILAQQDRDALMKLLTFEVVEEMVKKRVAKKAMIFGQEVTLVDNAKEVKCKVDPLLVSRLYDEWIMPLTKHVQVEYLLRRLDQNKLTSI.

Residues 3-256 (CGDYDDKLSL…QVEYLLRRLD (254 aa)) form the Chorismate mutase domain.

Homodimer. Expressed in root, stem, stigma, anther, leaf, petal tube, petal limb and sepal tissues with highest levels in petal tubes and stems.

The protein resides in the cytoplasm. The protein localises to the cytosol. The enzyme catalyses chorismate = prephenate. It participates in metabolic intermediate biosynthesis; prephenate biosynthesis; prephenate from chorismate: step 1/1. Its activity is regulated as follows. No allosteric regulation. In terms of biological role, mediates the conversion of chorismate to prephenate. This is Chorismate mutase 2 from Petunia hybrida (Petunia).